Here is a 311-residue protein sequence, read N- to C-terminus: 4-hydroxy-tetrahydrodipicolinate synthase (311 aa).

Residue Thr51 participates in pyruvate binding. Tyr140 functions as the Proton donor/acceptor in the catalytic mechanism. Lys168 serves as the catalytic Schiff-base intermediate with substrate. Ile209 lines the pyruvate pocket.

This sequence belongs to the DapA family. In terms of assembly, homotetramer; dimer of dimers.

It is found in the cytoplasm. It carries out the reaction L-aspartate 4-semialdehyde + pyruvate = (2S,4S)-4-hydroxy-2,3,4,5-tetrahydrodipicolinate + H2O + H(+). The protein operates within amino-acid biosynthesis; L-lysine biosynthesis via DAP pathway; (S)-tetrahydrodipicolinate from L-aspartate: step 3/4. Functionally, catalyzes the condensation of (S)-aspartate-beta-semialdehyde [(S)-ASA] and pyruvate to 4-hydroxy-tetrahydrodipicolinate (HTPA). The sequence is that of 4-hydroxy-tetrahydrodipicolinate synthase from Streptococcus suis (strain 98HAH33).